A 206-amino-acid chain; its full sequence is MPKIGMEPLRRKALVDAALRTIGHHGSLNVTMSDIAREAGVSAALAHHYFGSKQQLLLETIRSLLRDLRRDAVAALIRASGPREKLSAIVHVSFQSDQFTPETVAAWLAFYVEAQRSEETRRLLVIYSRRLRSNLMASLNRLCPPDDAARIAEGAAALIDGLYIRHSLRSAPLGLASAPALVEDYFDMQLKSFPDGQRAKPSIRTL.

Positions 8–68 constitute an HTH tetR-type domain; the sequence is PLRRKALVDA…ETIRSLLRDL (61 aa). Residues 31 to 50 constitute a DNA-binding region (H-T-H motif); it reads TMSDIAREAGVSAALAHHYF.

It functions in the pathway amine and polyamine biosynthesis; betaine biosynthesis via choline pathway [regulation]. In terms of biological role, repressor involved in the biosynthesis of the osmoprotectant glycine betaine. It represses transcription of the choline transporter BetT and the genes of BetAB involved in the synthesis of glycine betaine. The polypeptide is HTH-type transcriptional regulator BetI (Agrobacterium fabrum (strain C58 / ATCC 33970) (Agrobacterium tumefaciens (strain C58))).